A 255-amino-acid chain; its full sequence is 4-diphosphocytidyl-2-C-methyl-D-erythritol kinase (255 aa).

Lys6 is an active-site residue. 95–105 (PVCAGLGGGSS) contributes to the ATP binding site. The active site involves Asp137.

Belongs to the GHMP kinase family. IspE subfamily.

The catalysed reaction is 4-CDP-2-C-methyl-D-erythritol + ATP = 4-CDP-2-C-methyl-D-erythritol 2-phosphate + ADP + H(+). It functions in the pathway isoprenoid biosynthesis; isopentenyl diphosphate biosynthesis via DXP pathway; isopentenyl diphosphate from 1-deoxy-D-xylulose 5-phosphate: step 3/6. In terms of biological role, catalyzes the phosphorylation of the position 2 hydroxy group of 4-diphosphocytidyl-2C-methyl-D-erythritol. In Campylobacter jejuni subsp. jejuni serotype O:6 (strain 81116 / NCTC 11828), this protein is 4-diphosphocytidyl-2-C-methyl-D-erythritol kinase.